Here is a 525-residue protein sequence, read N- to C-terminus: ATP synthase subunit alpha (525 aa).

Gly172–Thr179 is an ATP binding site.

The protein belongs to the ATPase alpha/beta chains family. F-type ATPases have 2 components, CF(1) - the catalytic core - and CF(0) - the membrane proton channel. CF(1) has five subunits: alpha(3), beta(3), gamma(1), delta(1), epsilon(1). CF(0) has three main subunits: a(1), b(2) and c(9-12). The alpha and beta chains form an alternating ring which encloses part of the gamma chain. CF(1) is attached to CF(0) by a central stalk formed by the gamma and epsilon chains, while a peripheral stalk is formed by the delta and b chains.

It is found in the cell inner membrane. It carries out the reaction ATP + H2O + 4 H(+)(in) = ADP + phosphate + 5 H(+)(out). Produces ATP from ADP in the presence of a proton gradient across the membrane. The alpha chain is a regulatory subunit. The protein is ATP synthase subunit alpha of Parabacteroides distasonis (strain ATCC 8503 / DSM 20701 / CIP 104284 / JCM 5825 / NCTC 11152).